The chain runs to 334 residues: Phosphoribosylformylglycinamidine cyclo-ligase (334 aa).

The protein belongs to the AIR synthase family.

It localises to the cytoplasm. It carries out the reaction 2-formamido-N(1)-(5-O-phospho-beta-D-ribosyl)acetamidine + ATP = 5-amino-1-(5-phospho-beta-D-ribosyl)imidazole + ADP + phosphate + H(+). Its pathway is purine metabolism; IMP biosynthesis via de novo pathway; 5-amino-1-(5-phospho-D-ribosyl)imidazole from N(2)-formyl-N(1)-(5-phospho-D-ribosyl)glycinamide: step 2/2. The chain is Phosphoribosylformylglycinamidine cyclo-ligase from Pyrococcus abyssi (strain GE5 / Orsay).